The chain runs to 376 residues: MKDVPGFLQQSQSAGPGQAAVWHRLEELYNKKLWHQLTLQVLDFVQDPCFAQGDGLIKLYENFISEFEHRVNPLSLVEIILHVVRQMTDPTVALTFLEKTREKVKSSDEAVILCKTAIGALKLNIGDLQVTKETIEEVEEMLNNLPGVTSVHSRFYDLSSKYYQTIGNHASYYKDALRFLGCIDVKDLPVSEQQERAFTLGLAGLLGEGVYNFGELLMHPVLESLRSTDRQWLIDTLYAFNSGNVETFQALKSAWGQQPDLAANEALLLQKIQLLCLMEMTFTRPANHRQLTFEEIAKSAKVTVNEVELLVMKALSVGLVKGSIDEVDKRVHMTWVQPRVLDLQQIKGMKDRLEFWCTDVRSMEMLVEHQAHDILT.

The region spanning 171–338 is the PCI domain; it reads SYYKDALRFL…KRVHMTWVQP (168 aa).

As to quaternary structure, component of the 19S proteasome regulatory particle complex. The 26S proteasome consists of a 20S core particle (CP) and two 19S regulatory subunits (RP). The regulatory particle is made of a lid composed of 9 subunits including PSMD13, a base containing 6 ATPases and few additional components.

Functionally, component of the 26S proteasome, a multiprotein complex involved in the ATP-dependent degradation of ubiquitinated proteins. This complex plays a key role in the maintenance of protein homeostasis by removing misfolded or damaged proteins, which could impair cellular functions, and by removing proteins whose functions are no longer required. Therefore, the proteasome participates in numerous cellular processes, including cell cycle progression, apoptosis, or DNA damage repair. The chain is 26S proteasome non-ATPase regulatory subunit 13 from Gallus gallus (Chicken).